The sequence spans 477 residues: Tryptophan biosynthesis protein TrpCF (477 aa).

The indole-3-glycerol phosphate synthase stretch occupies residues 13 to 275 (SATVLQKIVL…NAVRSVIFGE (263 aa)). The tract at residues 276 to 477 (NKVCGLTRAQ…KVRLVFNNIY (202 aa)) is N-(5'-phosphoribosyl)anthranilate isomerase.

The protein in the N-terminal section; belongs to the TrpC family. It in the C-terminal section; belongs to the TrpF family. Monomer.

The catalysed reaction is N-(5-phospho-beta-D-ribosyl)anthranilate = 1-(2-carboxyphenylamino)-1-deoxy-D-ribulose 5-phosphate. It catalyses the reaction 1-(2-carboxyphenylamino)-1-deoxy-D-ribulose 5-phosphate + H(+) = (1S,2R)-1-C-(indol-3-yl)glycerol 3-phosphate + CO2 + H2O. The protein operates within amino-acid biosynthesis; L-tryptophan biosynthesis; L-tryptophan from chorismate: step 3/5. Its pathway is amino-acid biosynthesis; L-tryptophan biosynthesis; L-tryptophan from chorismate: step 4/5. Bifunctional enzyme that catalyzes two sequential steps of tryptophan biosynthetic pathway. The first reaction is catalyzed by the isomerase, coded by the TrpF domain; the second reaction is catalyzed by the synthase, coded by the TrpC domain. This Haemophilus influenzae (strain ATCC 51907 / DSM 11121 / KW20 / Rd) protein is Tryptophan biosynthesis protein TrpCF (trpC).